A 181-amino-acid polypeptide reads, in one-letter code: 3-hydroxyanthranilate 3,4-dioxygenase (181 aa).

Arginine 46 is a binding site for O2. Fe cation-binding residues include histidine 50, glutamate 56, and histidine 95. Residue glutamate 56 coordinates substrate. Substrate-binding residues include arginine 99 and glutamate 109.

It belongs to the 3-HAO family. Fe(2+) serves as cofactor.

Its subcellular location is the cytoplasm. The catalysed reaction is 3-hydroxyanthranilate + O2 = (2Z,4Z)-2-amino-3-carboxymuconate 6-semialdehyde. The protein operates within cofactor biosynthesis; NAD(+) biosynthesis; quinolinate from L-kynurenine: step 3/3. Functionally, catalyzes the oxidative ring opening of 3-hydroxyanthranilate to 2-amino-3-carboxymuconate semialdehyde, which spontaneously cyclizes to quinolinate. The sequence is that of 3-hydroxyanthranilate 3,4-dioxygenase from Mycosarcoma maydis (Corn smut fungus).